The following is a 246-amino-acid chain: Cell division protein ZapD (246 aa).

It belongs to the ZapD family. Interacts with FtsZ.

The protein resides in the cytoplasm. Its function is as follows. Cell division factor that enhances FtsZ-ring assembly. Directly interacts with FtsZ and promotes bundling of FtsZ protofilaments, with a reduction in FtsZ GTPase activity. The sequence is that of Cell division protein ZapD from Vibrio vulnificus (strain CMCP6).